The sequence spans 149 residues: 17 kDa major membrane protein (149 aa).

Residues 1–19 (MKKIIKLSLLSLSIAGLAS) form the signal peptide. Residue cysteine 20 is the site of N-palmitoyl cysteine attachment. Cysteine 20 is lipidated: S-diacylglycerol cysteine.

Its subcellular location is the cell outer membrane. The polypeptide is 17 kDa major membrane protein (Francisella tularensis subsp. holarctica (strain LVS)).